A 304-amino-acid polypeptide reads, in one-letter code: Histone H1.8 (304 aa).

Positions 1–24 (MAPGSVSSVSSSSFPSRDTSPSGS) are enriched in low complexity. Disordered stretches follow at residues 1–38 (MAPG…PSCR), 110–248 (SKAK…NSVA), and 270–304 (TVQE…NTQA). One can recognise an H15 domain in the interval 45 to 123 (RNPTMLHMVL…GATGSFKLVP (79 aa)). A compositionally biased stretch (low complexity) spans 132–144 (APKAGRGAAGAKE). Composition is skewed to basic and acidic residues over residues 153–166 (LKKD…MEKG), 189–202 (KPKE…KQDK), and 225–237 (ANAH…EKSK). A Nuclear localization signal motif is present at residues 154–170 (KKDQVGKATMEKGQKRR). Residues 270 to 281 (TVQETKVPTPSQ) are compositionally biased toward polar residues.

It belongs to the histone H1/H5 family. Oocyte-specific.

The protein localises to the cytoplasm. It is found in the nucleus. It localises to the chromosome. Functionally, may play a key role in the control of gene expression during oogenesis and early embryogenesis, presumably through the perturbation of chromatin structure. Essential for meiotic maturation of germinal vesicle-stage oocytes. The somatic type linker histone H1c is rapidly replaced by H1oo in a donor nucleus transplanted into an oocyte. The greater mobility of H1oo as compared to H1c may contribute to this rapid replacement and increased instability of the embryonic chromatin structure. The rapid replacement of H1c with H1oo may play an important role in nuclear remodeling. In Mus musculus (Mouse), this protein is Histone H1.8.